Reading from the N-terminus, the 250-residue chain is Proteasome subunit alpha type-7-A (250 aa).

Residue Lys-62 forms a Glycyl lysine isopeptide (Lys-Gly) (interchain with G-Cter in ubiquitin) linkage.

The protein belongs to the peptidase T1A family. In terms of assembly, component of the 20S core complex of the 26S proteasome. The 26S proteasome is composed of a core protease (CP), known as the 20S proteasome, capped at one or both ends by the 19S regulatory particle (RP/PA700). The 20S proteasome core is composed of 28 subunits that are arranged in four stacked rings, resulting in a barrel-shaped structure. The two end rings are each formed by seven alpha subunits, and the two central rings are each formed by seven beta subunits. The catalytic chamber with the active sites is on the inside of the barrel. Interacts with KIN10 and KIN11 SnRK subunits, and with the SKP1A/ASK1 subunit of the SCF E3 ubiquitin ligase complex. In terms of tissue distribution, expressed in roots, leaves and flowers.

The protein resides in the cytoplasm. It is found in the nucleus. The proteasome is a multicatalytic proteinase complex which is characterized by its ability to cleave peptides with Arg, Phe, Tyr, Leu, and Glu adjacent to the leaving group at neutral or slightly basic pH. The proteasome has an ATP-dependent proteolytic activity. Mediates the association of the SCF(TIR1) E3 ubiquitin ligase complex with the proteasome. This chain is Proteasome subunit alpha type-7-A (PAD1), found in Arabidopsis thaliana (Mouse-ear cress).